Reading from the N-terminus, the 335-residue chain is Histidinol-phosphate aminotransferase (335 aa).

K202 is subject to N6-(pyridoxal phosphate)lysine.

Belongs to the class-II pyridoxal-phosphate-dependent aminotransferase family. Histidinol-phosphate aminotransferase subfamily. In terms of assembly, homodimer. The cofactor is pyridoxal 5'-phosphate.

It carries out the reaction L-histidinol phosphate + 2-oxoglutarate = 3-(imidazol-4-yl)-2-oxopropyl phosphate + L-glutamate. It functions in the pathway amino-acid biosynthesis; L-histidine biosynthesis; L-histidine from 5-phospho-alpha-D-ribose 1-diphosphate: step 7/9. The polypeptide is Histidinol-phosphate aminotransferase (Thermotoga sp. (strain RQ2)).